A 190-amino-acid polypeptide reads, in one-letter code: 3-isopropylmalate dehydratase small subunit (190 aa).

This sequence belongs to the LeuD family. LeuD type 1 subfamily. Heterodimer of LeuC and LeuD.

It carries out the reaction (2R,3S)-3-isopropylmalate = (2S)-2-isopropylmalate. The protein operates within amino-acid biosynthesis; L-leucine biosynthesis; L-leucine from 3-methyl-2-oxobutanoate: step 2/4. Functionally, catalyzes the isomerization between 2-isopropylmalate and 3-isopropylmalate, via the formation of 2-isopropylmaleate. This is 3-isopropylmalate dehydratase small subunit from Staphylococcus aureus (strain MSSA476).